Here is a 372-residue protein sequence, read N- to C-terminus: 4-hydroxybenzoate polyprenyltransferase, mitochondrial (372 aa).

The transit peptide at 1–42 (MFIWQRKSILLGRSILGSGRVTVAGIIGSSRKRYTSSSSSSS) directs the protein to the mitochondrion. Helical transmembrane passes span 92-112 (PVGTWLLYLPCSWSILMGAMM), 114-134 (GATLSATAGMLGIFGVGALVM), 171-191 (ALVFLGAQTLVGMGVLSLLPA), 193-213 (CWWLGLASLPIVFTYPLFKRF), 229-249 (ALLGFPAMGVMSWPTMIPLYL), 298-318 (IALLAVAGLNSGLLWGPGFIG), and 352-372 (TGLYFTYALAVDYILRLFGFL).

It belongs to the UbiA prenyltransferase family. The cofactor is Mg(2+).

It localises to the mitochondrion inner membrane. It carries out the reaction an all-trans-polyprenyl diphosphate + 4-hydroxybenzoate = a 4-hydroxy-3-(all-trans-polyprenyl)benzoate + diphosphate. It participates in cofactor biosynthesis; ubiquinone biosynthesis. In terms of biological role, catalyzes the prenylation of para-hydroxybenzoate (PHB) with an all-trans polyprenyl group. Mediates the second step in the final reaction sequence of coenzyme Q (CoQ) biosynthesis, which is the condensation of the polyisoprenoid side chain with PHB, generating the first membrane-bound Q intermediate. This Saccharomyces cerevisiae (strain ATCC 204508 / S288c) (Baker's yeast) protein is 4-hydroxybenzoate polyprenyltransferase, mitochondrial.